Here is a 144-residue protein sequence, read N- to C-terminus: Probable nucleoside diphosphate kinase 5 (144 aa).

Residues Lys3, Phe51, Arg79, Thr85, Arg99, and Asn109 each contribute to the ATP site. His112 acts as the Pros-phosphohistidine intermediate in catalysis.

It belongs to the NDK family.

It carries out the reaction a 2'-deoxyribonucleoside 5'-diphosphate + ATP = a 2'-deoxyribonucleoside 5'-triphosphate + ADP. It catalyses the reaction a ribonucleoside 5'-diphosphate + ATP = a ribonucleoside 5'-triphosphate + ADP. Functionally, involved in the synthesis of nucleoside triphosphates other than ATP. The ATP gamma phosphate is transferred to the NDP beta phosphate via a ping-pong mechanism, using a phosphorylated active-site intermediate. This chain is Probable nucleoside diphosphate kinase 5, found in Arabidopsis thaliana (Mouse-ear cress).